The sequence spans 174 residues: 3-hydroxyanthranilate 3,4-dioxygenase (174 aa).

Arg47 contacts O2. Residues His51, Glu57, and His95 each coordinate Fe cation. Glu57 contacts substrate. Substrate is bound by residues Arg99 and Glu110. The Fe cation site is built by Cys125, Cys128, Cys162, and Cys165.

Belongs to the 3-HAO family. In terms of assembly, homodimer. Requires Fe(2+) as cofactor.

It carries out the reaction 3-hydroxyanthranilate + O2 = (2Z,4Z)-2-amino-3-carboxymuconate 6-semialdehyde. Its pathway is cofactor biosynthesis; NAD(+) biosynthesis; quinolinate from L-kynurenine: step 3/3. With respect to regulation, inhibited by 4-chloro-3-hydroxyanthranilate. Mechanism of inactivation involves the oxidation of the catalytic active site Fe(2+) to the catalytically inactive Fe(3+) oxidation state, superoxide production, and formation of two disulfide bonds between Cys-125 and Cys-128, and Cys-162 and Cys-165. Enzyme can be reactivated under reducing conditions. Functionally, catalyzes the oxidative ring opening of 3-hydroxyanthranilate to 2-amino-3-carboxymuconate semialdehyde, which spontaneously cyclizes to quinolinate. The sequence is that of 3-hydroxyanthranilate 3,4-dioxygenase from Cupriavidus metallidurans (strain ATCC 43123 / DSM 2839 / NBRC 102507 / CH34) (Ralstonia metallidurans).